The sequence spans 347 residues: GMP reductase (347 aa).

Ala108–Ala131 is a binding site for NADP(+). Residues Gly181 and Gly183 each contribute to the K(+) site. The active-site Thioimidate intermediate is Cys186. Residue Ile216–Val239 participates in NADP(+) binding.

It belongs to the IMPDH/GMPR family. GuaC type 1 subfamily. Homotetramer.

The catalysed reaction is IMP + NH4(+) + NADP(+) = GMP + NADPH + 2 H(+). In terms of biological role, catalyzes the irreversible NADPH-dependent deamination of GMP to IMP. It functions in the conversion of nucleobase, nucleoside and nucleotide derivatives of G to A nucleotides, and in maintaining the intracellular balance of A and G nucleotides. This Shigella boydii serotype 18 (strain CDC 3083-94 / BS512) protein is GMP reductase.